The chain runs to 359 residues: Photosystem II protein D1 1 (359 aa).

3 helical membrane-spanning segments follow: residues 29 to 46, 118 to 133, and 142 to 156; these read YVGWFGVLMIPTLLAATI, HFLIGIYAYMGREWEL, and WICVAYSAPVAAASA. H118 contributes to the chlorophyll a binding site. A pheophytin a-binding site is contributed by Y126. [CaMn4O5] cluster contacts are provided by D170 and E189. Residues 197-218 form a helical membrane-spanning segment; the sequence is FHMLGVAGVFGGSLFSAMHGSL. H198 serves as a coordination point for chlorophyll a. A quinone-binding positions include H215 and 264-265; that span reads SF. A Fe cation-binding site is contributed by H215. Fe cation is bound at residue H272. The helical transmembrane segment at 274 to 288 threads the bilayer; sequence FLAAWPVVGIWFTAL. [CaMn4O5] cluster is bound by residues H332, E333, D342, and A344. Positions 345–359 are excised as a propeptide; it reads AAESTPVALQAPAIG.

This sequence belongs to the reaction center PufL/M/PsbA/D family. PSII is composed of 1 copy each of membrane proteins PsbA, PsbB, PsbC, PsbD, PsbE, PsbF, PsbH, PsbI, PsbJ, PsbK, PsbL, PsbM, PsbT, PsbX, PsbY, PsbZ, Psb30/Ycf12, peripheral proteins PsbO, CyanoQ (PsbQ), PsbU, PsbV and a large number of cofactors. It forms dimeric complexes. Requires The D1/D2 heterodimer binds P680, chlorophylls that are the primary electron donor of PSII, and subsequent electron acceptors. It shares a non-heme iron and each subunit binds pheophytin, quinone, additional chlorophylls, carotenoids and lipids. D1 provides most of the ligands for the Mn4-Ca-O5 cluster of the oxygen-evolving complex (OEC). There is also a Cl(-1) ion associated with D1 and D2, which is required for oxygen evolution. The PSII complex binds additional chlorophylls, carotenoids and specific lipids. as cofactor. In terms of processing, tyr-161 forms a radical intermediate that is referred to as redox-active TyrZ, YZ or Y-Z. C-terminally processed by CtpA; processing is essential to allow assembly of the oxygen-evolving complex and thus photosynthetic growth.

The protein localises to the cellular thylakoid membrane. The catalysed reaction is 2 a plastoquinone + 4 hnu + 2 H2O = 2 a plastoquinol + O2. Functionally, photosystem II (PSII) is a light-driven water:plastoquinone oxidoreductase that uses light energy to abstract electrons from H(2)O, generating O(2) and a proton gradient subsequently used for ATP formation. It consists of a core antenna complex that captures photons, and an electron transfer chain that converts photonic excitation into a charge separation. The D1/D2 (PsbA/PsbD) reaction center heterodimer binds P680, the primary electron donor of PSII as well as several subsequent electron acceptors. The protein is Photosystem II protein D1 1 of Synechococcus sp. (strain CC9605).